The sequence spans 328 residues: Solute-binding protein Bamb_6123 (328 aa).

The N-terminal stretch at Met1 to Ala26 is a signal peptide. Residues His35, Glu73, Arg89, Arg149, Asn209, and Glu236 each contribute to the beta-D-galacturonate site. Residues His35, Glu73, Arg89, Arg149, Asn209, and Glu236 each contribute to the beta-D-glucuronate site.

Belongs to the bacterial solute-binding protein 7 family. As to quaternary structure, the complex is comprised of an extracytoplasmic solute-binding protein and a heteromeric permease formed by two transmembrane proteins.

It localises to the periplasm. In terms of biological role, solute-binding protein that binds D-galacturonate and D-glucuronate (in vitro). Probably part of a tripartite ATP-independent periplasmic (TRAP) transport system that mediates solute transport into the cytoplasm. The protein is Solute-binding protein Bamb_6123 of Burkholderia ambifaria (strain ATCC BAA-244 / DSM 16087 / CCUG 44356 / LMG 19182 / AMMD) (Burkholderia cepacia (strain AMMD)).